Consider the following 459-residue polypeptide: Putrescine aminotransferase (459 aa).

Pyridoxal 5'-phosphate is bound by residues 150–151 and Q274; that span reads GT. Position 300 is an N6-(pyridoxal phosphate)lysine (K300). T332 is a pyridoxal 5'-phosphate binding site.

The protein belongs to the class-III pyridoxal-phosphate-dependent aminotransferase family. Putrescine aminotransferase subfamily. Requires pyridoxal 5'-phosphate as cofactor.

The catalysed reaction is an alkane-alpha,omega-diamine + 2-oxoglutarate = an omega-aminoaldehyde + L-glutamate. It catalyses the reaction putrescine + 2-oxoglutarate = 1-pyrroline + L-glutamate + H2O. It carries out the reaction cadaverine + 2-oxoglutarate = 5-aminopentanal + L-glutamate. The protein operates within amine and polyamine degradation; putrescine degradation; 4-aminobutanal from putrescine (transaminase route): step 1/1. Its function is as follows. Catalyzes the aminotransferase reaction from putrescine to 2-oxoglutarate, leading to glutamate and 4-aminobutanal, which spontaneously cyclizes to form 1-pyrroline. This is the first step in one of two pathways for putrescine degradation, where putrescine is converted into 4-aminobutanoate (gamma-aminobutyrate or GABA) via 4-aminobutanal. Also functions as a cadaverine transaminase in a a L-lysine degradation pathway to succinate that proceeds via cadaverine, glutarate and L-2-hydroxyglutarate. The polypeptide is Putrescine aminotransferase (Escherichia coli O17:K52:H18 (strain UMN026 / ExPEC)).